An 825-amino-acid chain; its full sequence is Putative NAD(+)--arginine ADP-ribosyltransferase Mav (825 aa).

The interval A435–H673 is disordered. Pro residues-rich tracts occupy residues P443–P457 and S468–H491. A compositionally biased stretch (low complexity) spans P560 to G579. The segment covering P580 to P589 has biased composition (pro residues). Low complexity predominate over residues E590–S599. Positions K650–R825 constitute a TR mART core domain. A compositionally biased stretch (basic and acidic residues) spans G656–L670. Residues T687–R699, R730–N733, and E750 each bind NAD(+). R730 is a catalytic residue. Active-site residues include S755 and E795. NAD(+) is bound at residue E795.

Belongs to the Arg-specific ADP-ribosyltransferase family.

The protein resides in the secreted. The enzyme catalyses L-arginyl-[protein] + NAD(+) = N(omega)-(ADP-D-ribosyl)-L-arginyl-[protein] + nicotinamide + H(+). In terms of biological role, a probable mono(ADP-ribosyl)transferase, it may ADP-ribosylate Arg in target protein(s). The chain is Putative NAD(+)--arginine ADP-ribosyltransferase Mav from Mycobacterium avium (strain 104).